Reading from the N-terminus, the 116-residue chain is Promotilin (116 aa).

Positions 1 to 25 (MVSRKAVAVLLMVHVAVMLASQTEA) are cleaved as a signal peptide. The tract at residues 39 to 74 (REKERNKGQKKSLIVQQRSEEVGPLDPVEPPEEEEN) is disordered.

It belongs to the motilin family.

The protein resides in the secreted. Plays an important role in the regulation of interdigestive gastrointestinal motility and indirectly causes rhythmic contraction of duodenal and colonic smooth muscle. The protein is Promotilin (MLN) of Felis catus (Cat).